The primary structure comprises 672 residues: Protein OS-9 (672 aa).

A signal peptide spans 1–26; the sequence is MAAEVLLSSLLGLLFLGLLLPARLTG. Residues 108-230 enclose the MRH domain; that stretch reads APCLLKTKDW…TIRTSRLCPH (123 aa). Cysteines 110 and 123 form a disulfide. 3 residues coordinate a mannooligosaccharide derivative: Trp117, Trp118, and Gln130. An N-linked (GlcNAc...) asparagine glycan is attached at Asn177. 2 disulfides stabilise this stretch: Cys181/Cys216 and Cys196/Cys228. Positions 182, 188, 212, and 218 each coordinate a mannooligosaccharide derivative. Disordered regions lie at residues 261–355, 372–452, 511–548, and 637–672; these read RQAE…NVQV, KAAE…LLPS, ENQSPELVQKYKKRRVVPQKPPPSPHPTEEEPEHRVRV, and EANKERQRQSELESNYRRVWGSPGGEDTGDLDEFDF. Composition is skewed to basic and acidic residues over residues 263 to 281, 294 to 310, 320 to 338, 372 to 386, and 394 to 409; these read AESKQHEEKTTEEVQDTDR, PKKEDVSPAKEEKESEL, AAAREEAQAGEQDLNHEAA, KAAEKGKPSVRREQP, and PQREAEGTKAKGKDGE. A compositionally biased stretch (acidic residues) spans 414 to 435; it reads MEEEDGDDEEEEEEEEEDEEEQ. Residues 637-652 show a composition bias toward basic and acidic residues; that stretch reads EANKERQRQSELESNY. Residues 663–672 are compositionally biased toward acidic residues; that stretch reads DTGDLDEFDF.

This sequence belongs to the OS-9 family. In terms of assembly, component of the HRD1 complex, which comprises at least SYNV1/HRD1, DERL1/2, FAM8A1, HERPUD1/HERP, OS9, SEL1L and UBE2J1. FAM8A1 is stabilized by interaction with SYNV1, which prevents its proteasomal degradation. OS9 and UBE2J1 recruitment to the complex may be mediated by SEL1L. Through this complex, may interact with ERLEC1 and HSPA5. Interacts (via C-terminus) with CPNE6 (via second C2 domain); this interaction occurs in a calcium-dependent manner in vitro. Interacts with CREB3. In terms of processing, N-glycosylated. Intramolecular disulfide bonds.

The protein localises to the endoplasmic reticulum lumen. Functionally, lectin component of the HRD1 complex, which functions in endoplasmic reticulum (ER) quality control and ER-associated degradation (ERAD). Specifically recognizes and binds improperly folded glycoproteins as well as hyperglycosylated proteins, retain them in the ER, and transfers them to the ubiquitination machinery and promote their degradation. Possible targets include TRPV4 as well as hyperglycosylated HSP90B1. The polypeptide is Protein OS-9 (Os9) (Mus musculus (Mouse)).